The sequence spans 528 residues: Glutamyl-tRNA(Gln) amidotransferase subunit A, mitochondrial (528 aa).

Lysine 76 acts as the Charge relay system in catalysis. A disordered region spans residues 148–167 (YREKRKQNPHSENEDSDWLI). Serine 171 acts as the Charge relay system in catalysis. Serine 195 serves as the catalytic Acyl-ester intermediate.

The protein belongs to the amidase family. GatA subfamily. As to quaternary structure, subunit of the heterotrimeric GatCAB amidotransferase (AdT) complex, composed of A (QRSL1), B (GATB) and C (GATC) subunits.

The protein localises to the mitochondrion. The enzyme catalyses L-glutamyl-tRNA(Gln) + L-glutamine + ATP + H2O = L-glutaminyl-tRNA(Gln) + L-glutamate + ADP + phosphate + H(+). Its function is as follows. Allows the formation of correctly charged Gln-tRNA(Gln) through the transamidation of misacylated Glu-tRNA(Gln) in the mitochondria. The reaction takes place in the presence of glutamine and ATP through an activated gamma-phospho-Glu-tRNA(Gln). The polypeptide is Glutamyl-tRNA(Gln) amidotransferase subunit A, mitochondrial (Homo sapiens (Human)).